The primary structure comprises 95 residues: Co-chaperonin GroES (95 aa).

The protein belongs to the GroES chaperonin family. In terms of assembly, heptamer of 7 subunits arranged in a ring. Interacts with the chaperonin GroEL.

Its subcellular location is the cytoplasm. Functionally, together with the chaperonin GroEL, plays an essential role in assisting protein folding. The GroEL-GroES system forms a nano-cage that allows encapsulation of the non-native substrate proteins and provides a physical environment optimized to promote and accelerate protein folding. GroES binds to the apical surface of the GroEL ring, thereby capping the opening of the GroEL channel. In Xylella fastidiosa (strain M23), this protein is Co-chaperonin GroES.